The primary structure comprises 498 residues: Probable cytosol aminopeptidase (498 aa).

Residues Lys264 and Asp269 each contribute to the Mn(2+) site. Lys276 is a catalytic residue. 3 residues coordinate Mn(2+): Asp287, Asp346, and Glu348. Arg350 is an active-site residue.

Belongs to the peptidase M17 family. Mn(2+) serves as cofactor.

It localises to the cytoplasm. It carries out the reaction Release of an N-terminal amino acid, Xaa-|-Yaa-, in which Xaa is preferably Leu, but may be other amino acids including Pro although not Arg or Lys, and Yaa may be Pro. Amino acid amides and methyl esters are also readily hydrolyzed, but rates on arylamides are exceedingly low.. It catalyses the reaction Release of an N-terminal amino acid, preferentially leucine, but not glutamic or aspartic acids.. In terms of biological role, presumably involved in the processing and regular turnover of intracellular proteins. Catalyzes the removal of unsubstituted N-terminal amino acids from various peptides. The sequence is that of Probable cytosol aminopeptidase from Rhizobium rhizogenes (strain K84 / ATCC BAA-868) (Agrobacterium radiobacter).